The primary structure comprises 422 residues: Tyrosine--tRNA ligase (422 aa).

Residue Y37 coordinates L-tyrosine. The short motif at 42–51 is the 'HIGH' region element; it reads PTEESLHIGH. Positions 175 and 179 each coordinate L-tyrosine. The short motif at 235-239 is the 'KMSKS' region element; it reads KFGKT. K238 lines the ATP pocket. Residues 357 to 414 form the S4 RNA-binding domain; that stretch reads KDLQEALVLTSLAQSRTQAKNMIISNSISINTEKIRKNHIFHEKDKLFGKFTLLSRGK.

This sequence belongs to the class-I aminoacyl-tRNA synthetase family. TyrS type 1 subfamily. As to quaternary structure, homodimer.

The protein localises to the cytoplasm. It catalyses the reaction tRNA(Tyr) + L-tyrosine + ATP = L-tyrosyl-tRNA(Tyr) + AMP + diphosphate + H(+). In terms of biological role, catalyzes the attachment of tyrosine to tRNA(Tyr) in a two-step reaction: tyrosine is first activated by ATP to form Tyr-AMP and then transferred to the acceptor end of tRNA(Tyr). This is Tyrosine--tRNA ligase from Buchnera aphidicola subsp. Acyrthosiphon pisum (strain APS) (Acyrthosiphon pisum symbiotic bacterium).